Consider the following 498-residue polypeptide: Protein MGF 505-5R (498 aa).

Belongs to the asfivirus MGF 505 family.

Functionally, plays a role in virus cell tropism, and may be required for efficient virus replication in macrophages. The chain is Protein MGF 505-5R from Ornithodoros (relapsing fever ticks).